Consider the following 185-residue polypeptide: Large ribosomal subunit protein uL5 (185 aa).

It belongs to the universal ribosomal protein uL5 family. In terms of assembly, part of the 50S ribosomal subunit; part of the 5S rRNA/L5/L18/L25 subcomplex. Contacts the 5S rRNA and the P site tRNA. Forms a bridge to the 30S subunit in the 70S ribosome.

In terms of biological role, this is one of the proteins that bind and probably mediate the attachment of the 5S RNA into the large ribosomal subunit, where it forms part of the central protuberance. In the 70S ribosome it contacts protein S13 of the 30S subunit (bridge B1b), connecting the 2 subunits; this bridge is implicated in subunit movement. Contacts the P site tRNA; the 5S rRNA and some of its associated proteins might help stabilize positioning of ribosome-bound tRNAs. In Rhodopseudomonas palustris (strain HaA2), this protein is Large ribosomal subunit protein uL5.